The sequence spans 627 residues: Altered inheritance of mitochondria protein 9, mitochondrial (627 aa).

The transit peptide at 1 to 43 (MIRYTVAGHSRRCVVGASKRVGAIKCITVAATKRFISNKPNEV) directs the protein to the mitochondrion.

The protein belongs to the AIM9 family.

Its subcellular location is the mitochondrion. The chain is Altered inheritance of mitochondria protein 9, mitochondrial (AIM9) from Saccharomyces cerevisiae (strain YJM789) (Baker's yeast).